We begin with the raw amino-acid sequence, 365 residues long: Outer capsid protein sigma-3 (365 aa).

The CCHC-type zinc finger occupies 51–73 (CMHCLGVVGSLQRKLKHLPHHRC).

It belongs to the orthoreovirus sigma-3 protein family. As to quaternary structure, heterohexamer of three sigma-3 and three Mu-1 proteins. The RNA-binding form is probably a homodimer. Cleaved during virus the endosomal proteolytic disassembly of the outer capsid.

Its subcellular location is the virion. Stimulates translation by blocking the activation of the dsRNA-dependent protein kinase EIF2AK2/PKR, thereby inhibiting the host interferon response. Sigma3 prevents the activation of EIF2AK2 by competing with the kinase for dsRNA-binding. Its function is as follows. The viral outer shell polypeptides, of which sigma-3 is one, impose structural constraints that prevent elongation of nascent transcripts by the RNA-dependent RNA polymerase lambda-3. This is Outer capsid protein sigma-3 (S4) from Mammalia (T1L).